The following is a 388-amino-acid chain: Probable proton-coupled zinc antiporter SLC30A3 (388 aa).

The interval 1–46 (MEPSPAAGGLETTRLVSPRDRGGAGGSLRLKSLFTEPSEPLPEESK) is disordered. Topologically, residues 1–75 (MEPSPAAGGL…TPERLHARRQ (75 aa)) are cytoplasmic. Residues 76–96 (LYAACAVCFVFMAGEVVGGYL) form a helical membrane-spanning segment. Residues 97-105 (AHSLAIMTD) are Lumenal-facing. A helical transmembrane segment spans residues 106–126 (AAHLLADVGSMMGSLFSLWLS). Zn(2+) is bound by residues histidine 108 and aspartate 112. Topologically, residues 127–145 (TRPATRTMTFGWHRSETLG) are cytoplasmic. A helical transmembrane segment spans residues 146–166 (ALASVVSLWMVTGILLYLAFV). Residues 167-177 (RLLHSDYHIEG) are Lumenal-facing. Residues 178–198 (GAMLLTASIAVCANLLMAFVL) form a helical membrane-spanning segment. Topologically, residues 199–235 (HQAGPPHSHGSRGAEYAPLEEGPEEPLPLGNTSVRAA) are cytoplasmic. The chain crosses the membrane as a helical span at residues 236-256 (FVHVLGDLLQSFGVLAASILI). Zn(2+) is bound by residues histidine 238 and aspartate 242. Residues 257–264 (YFKPQYKA) are Lumenal-facing. Residues 265–285 (ADPISTFLFSICALGSTAPTL) traverse the membrane as a helical segment. Over 286 to 388 (RDVLRILMEG…CLRCQEPPQA (103 aa)) the chain is Cytoplasmic. Tyrosine 357 is covalently cross-linked (Dityrosine (Tyr-Tyr) (interchain with Y-372)). Tyrosine 372 is covalently cross-linked (Dityrosine (Tyr-Tyr) (interchain with Y-357)).

This sequence belongs to the cation diffusion facilitator (CDF) transporter (TC 2.A.4) family. SLC30A subfamily. Homodimer; dityrosine-linked. Homodimerization seems specific of the human protein and enhances the zinc transport efficiency. Interacts with TMEM163. Post-translationally, homodimerization through dityrosine bonds is stimulated by oxidative stress.

It localises to the cytoplasmic vesicle. The protein resides in the secretory vesicle. It is found in the synaptic vesicle membrane. Its subcellular location is the synapse. The protein localises to the synaptosome. It localises to the late endosome membrane. The protein resides in the lysosome membrane. It catalyses the reaction Zn(2+)(in) + 2 H(+)(out) = Zn(2+)(out) + 2 H(+)(in). Its function is as follows. Probable proton-coupled zinc ion antiporter mediating the import of zinc from cytoplasm into synaptic vesicles and participating to cellular zinc ion homeostasis in the brain. This chain is Probable proton-coupled zinc antiporter SLC30A3, found in Homo sapiens (Human).